A 70-amino-acid chain; its full sequence is Conotoxin AbVIB (70 aa).

Residues 1–17 form the signal peptide; sequence VIIIAVLFLTACQLTTA. Positions 18 to 41 are excised as a propeptide; the sequence is ETSSRGKQKHRALRSTDKNSKLTR. Residues 20–41 form a disordered region; that stretch reads SSRGKQKHRALRSTDKNSKLTR. Cystine bridges form between Cys43/Cys57, Cys50/Cys61, and Cys56/Cys68.

The protein belongs to the conotoxin O1 superfamily. In terms of tissue distribution, expressed by the venom duct.

It is found in the secreted. The protein is Conotoxin AbVIB of Conus abbreviatus (Abbreviated cone).